A 199-amino-acid polypeptide reads, in one-letter code: Fe/S biogenesis protein NfuA (199 aa).

[4Fe-4S] cluster-binding residues include cysteine 151 and cysteine 154.

Belongs to the NfuA family. In terms of assembly, homodimer. It depends on [4Fe-4S] cluster as a cofactor.

Functionally, involved in iron-sulfur cluster biogenesis. Binds a 4Fe-4S cluster, can transfer this cluster to apoproteins, and thereby intervenes in the maturation of Fe/S proteins. Could also act as a scaffold/chaperone for damaged Fe/S proteins. The chain is Fe/S biogenesis protein NfuA from Xylella fastidiosa (strain M12).